Consider the following 695-residue polypeptide: Nicastrin (695 aa).

The first 22 residues, 1–22 (MEMRLNAASIWLLILSYGATIA), serve as a signal peptide directing secretion. At 23–654 (QGERTRDKMY…IFLRPSNVHQ (632 aa)) the chain is on the extracellular side. Residues Asn45, Asn108, Asn116, Asn138, Asn381, Asn461, Asn489, Asn585, and Asn609 are each glycosylated (N-linked (GlcNAc...) asparagine). The chain crosses the membrane as a helical span at residues 655-675 (VTTLSVGIVVLIISFCLVYII). Residues 676–695 (SSRSEVLFEDLPASNAALFG) lie on the Cytoplasmic side of the membrane.

The protein belongs to the nicastrin family. As to quaternary structure, component of the gamma-secretase complex, a complex composed of a presenilin (Psn) homodimer, nicastrin (Nct), Aph-1 and Pen-2.

It is found in the membrane. In terms of biological role, essential subunit of the gamma-secretase complex, an endoprotease complex that catalyzes the intramembrane cleavage of integral membrane proteins such as Notch. It probably represents a stabilizing cofactor required for the assembly of the gamma-secretase complex. The polypeptide is Nicastrin (Drosophila melanogaster (Fruit fly)).